A 233-amino-acid polypeptide reads, in one-letter code: Short chain dehydrogenase trt9 (233 aa).

Positions 33, 95, 127, 131, and 160 each coordinate NADP(+). The active-site Proton donor is Tyr-127. Catalysis depends on Lys-131, which acts as the Lowers pKa of active site Tyr.

It belongs to the short-chain dehydrogenases/reductases (SDR) family.

The protein operates within secondary metabolite biosynthesis; terpenoid biosynthesis. In terms of biological role, short chain dehydrogenase; part of the gene cluster that mediates the biosynthesis of terretonin, a fungal meroterpenoid that acts as a mycotoxin. The first step of the pathway is the synthesis of 3,5-dimethylorsellinic acid (DMOA) by the polyketide synthase trt4. DMOA is then prenylated into farnesyl-DMOA by the polyprenyl transferase trt2. Methylation by the methyltransferase trt5 then leads to farnesyl-DMOA methyl ester which is further subject to epoxidation by the FAD-dependent monooxygenase trt8 to yield epoxyfarnesyl-DMOA methyl ester. Cyclization of epoxyfarnesyl-DMOA methyl ester by the terpene cyclase trt1 leads to a tetracycle intermediate which is in turn converted to preterretonin. Dehydrogenase trt9 comes next to transform preterretonin to preterrenoid. The FAD-dependent monooxygenase trt3 is then required for the C-hydroxylation at C16 of preterrenoid to yield terrenoid. The cytochrome P450 trt6 catalyzes three successive oxidations to transform terrenoid into an unstable intermediate, which then undergoes the D-ring expansion and unusual rearrangement of the methoxy group to afford the core skeleton of terretonin. Trt14 catalyzes the D-ring expansion of terretonin involving intramolecular methoxy rearrangement as well as the hydrolysis of the expanded D-ring and the methyl ester moiety. Finally, the nonheme iron-dependent dioxygenase trt7 accomplishes the last two oxidation reactions steps to complete the biosynthesis of terretonin. Terretonin C is produced via spontaneous decarboxylation of the terretonin precursor. Another shunt product of the terretonin biosynthesis is dihydrofarnesyl-DMOA, derived from epoxyfarnesyl-DMOA through hydrolysis of the epoxide. The polypeptide is Short chain dehydrogenase trt9 (Aspergillus terreus (strain NIH 2624 / FGSC A1156)).